The sequence spans 150 residues: Large ribosomal subunit protein uL11 (150 aa).

The protein belongs to the universal ribosomal protein uL11 family. Part of the ribosomal stalk of the 50S ribosomal subunit. Interacts with L10 and the large rRNA to form the base of the stalk. L10 forms an elongated spine to which L12 dimers bind in a sequential fashion forming a multimeric L10(L12)X complex. One or more lysine residues are methylated.

In terms of biological role, forms part of the ribosomal stalk which helps the ribosome interact with GTP-bound translation factors. This chain is Large ribosomal subunit protein uL11, found in Cereibacter sphaeroides (strain KD131 / KCTC 12085) (Rhodobacter sphaeroides).